A 1373-amino-acid chain; its full sequence is DNA-directed RNA polymerase subunit beta (1373 aa).

Belongs to the RNA polymerase beta chain family. In terms of assembly, the RNAP catalytic core consists of 2 alpha, 1 beta, 1 beta' and 1 omega subunit. When a sigma factor is associated with the core the holoenzyme is formed, which can initiate transcription.

It carries out the reaction RNA(n) + a ribonucleoside 5'-triphosphate = RNA(n+1) + diphosphate. DNA-dependent RNA polymerase catalyzes the transcription of DNA into RNA using the four ribonucleoside triphosphates as substrates. This chain is DNA-directed RNA polymerase subunit beta, found in Rickettsia peacockii (strain Rustic).